The sequence spans 337 residues: Primase homolog protein (337 aa).

The region spanning 205–304 (SEIIIVEGEP…WLVKWPKKSE (100 aa)) is the Toprim domain. Mg(2+)-binding residues include Glu-211, Asp-273, and Asp-275.

Mg(2+) serves as cofactor.

May act as a DNA primase. This is Primase homolog protein from Arabidopsis thaliana (Mouse-ear cress).